We begin with the raw amino-acid sequence, 173 residues long: Large ribosomal subunit protein uL10 (173 aa).

The protein belongs to the universal ribosomal protein uL10 family. Part of the ribosomal stalk of the 50S ribosomal subunit. The N-terminus interacts with L11 and the large rRNA to form the base of the stalk. The C-terminus forms an elongated spine to which L12 dimers bind in a sequential fashion forming a multimeric L10(L12)X complex.

Forms part of the ribosomal stalk, playing a central role in the interaction of the ribosome with GTP-bound translation factors. This is Large ribosomal subunit protein uL10 from Nitratidesulfovibrio vulgaris (strain ATCC 29579 / DSM 644 / CCUG 34227 / NCIMB 8303 / VKM B-1760 / Hildenborough) (Desulfovibrio vulgaris).